The chain runs to 458 residues: Argininosuccinate lyase (458 aa).

It belongs to the lyase 1 family. Argininosuccinate lyase subfamily.

The protein localises to the cytoplasm. It carries out the reaction 2-(N(omega)-L-arginino)succinate = fumarate + L-arginine. It functions in the pathway amino-acid biosynthesis; L-arginine biosynthesis; L-arginine from L-ornithine and carbamoyl phosphate: step 3/3. This Geobacter sp. (strain M21) protein is Argininosuccinate lyase.